Consider the following 847-residue polypeptide: Alanine--tRNA ligase (847 aa).

His-554, His-558, Cys-656, and His-660 together coordinate Zn(2+).

This sequence belongs to the class-II aminoacyl-tRNA synthetase family. Zn(2+) serves as cofactor.

It localises to the cytoplasm. It carries out the reaction tRNA(Ala) + L-alanine + ATP = L-alanyl-tRNA(Ala) + AMP + diphosphate. Catalyzes the attachment of alanine to tRNA(Ala) in a two-step reaction: alanine is first activated by ATP to form Ala-AMP and then transferred to the acceptor end of tRNA(Ala). Also edits incorrectly charged Ser-tRNA(Ala) and Gly-tRNA(Ala) via its editing domain. This is Alanine--tRNA ligase from Helicobacter acinonychis (strain Sheeba).